The sequence spans 212 residues: Thymidylate kinase (212 aa).

7–14 (GIEGCGKS) serves as a coordination point for ATP.

The protein belongs to the thymidylate kinase family.

It carries out the reaction dTMP + ATP = dTDP + ADP. Functionally, phosphorylation of dTMP to form dTDP in both de novo and salvage pathways of dTTP synthesis. The polypeptide is Thymidylate kinase (Trichlorobacter lovleyi (strain ATCC BAA-1151 / DSM 17278 / SZ) (Geobacter lovleyi)).